The sequence spans 420 residues: Gamma-glutamyl phosphate reductase (420 aa).

It belongs to the gamma-glutamyl phosphate reductase family.

The protein localises to the cytoplasm. It catalyses the reaction L-glutamate 5-semialdehyde + phosphate + NADP(+) = L-glutamyl 5-phosphate + NADPH + H(+). The protein operates within amino-acid biosynthesis; L-proline biosynthesis; L-glutamate 5-semialdehyde from L-glutamate: step 2/2. Its function is as follows. Catalyzes the NADPH-dependent reduction of L-glutamate 5-phosphate into L-glutamate 5-semialdehyde and phosphate. The product spontaneously undergoes cyclization to form 1-pyrroline-5-carboxylate. The chain is Gamma-glutamyl phosphate reductase from Oenococcus oeni (strain ATCC BAA-331 / PSU-1).